The sequence spans 120 residues: NAD(P)H-quinone oxidoreductase subunit 3, chloroplastic (120 aa).

The next 3 membrane-spanning stretches (helical) occupy residues 10 to 30 (FWAF…ISGV), 64 to 84 (MFAL…PWAM), and 88 to 108 (VLGV…IGGL).

Belongs to the complex I subunit 3 family. As to quaternary structure, NDH is composed of at least 16 different subunits, 5 of which are encoded in the nucleus.

It localises to the plastid. It is found in the chloroplast thylakoid membrane. It catalyses the reaction a plastoquinone + NADH + (n+1) H(+)(in) = a plastoquinol + NAD(+) + n H(+)(out). It carries out the reaction a plastoquinone + NADPH + (n+1) H(+)(in) = a plastoquinol + NADP(+) + n H(+)(out). In terms of biological role, NDH shuttles electrons from NAD(P)H:plastoquinone, via FMN and iron-sulfur (Fe-S) centers, to quinones in the photosynthetic chain and possibly in a chloroplast respiratory chain. The immediate electron acceptor for the enzyme in this species is believed to be plastoquinone. Couples the redox reaction to proton translocation, and thus conserves the redox energy in a proton gradient. In Ipomoea purpurea (Common morning glory), this protein is NAD(P)H-quinone oxidoreductase subunit 3, chloroplastic.